The primary structure comprises 288 residues: Acetyl-coenzyme A carboxylase carboxyl transferase subunit beta (288 aa).

In terms of domain architecture, CoA carboxyltransferase N-terminal spans 32–288 (MWAKCPSCKR…LRLHSLEGWR (257 aa)). C36, C39, C54, and C57 together coordinate Zn(2+). The C4-type zinc finger occupies 36 to 57 (CPSCKRTLYTKEMGAEKICPHC).

The protein belongs to the AccD/PCCB family. Acetyl-CoA carboxylase is a heterohexamer composed of biotin carboxyl carrier protein (AccB), biotin carboxylase (AccC) and two subunits each of ACCase subunit alpha (AccA) and ACCase subunit beta (AccD). The cofactor is Zn(2+).

It is found in the cytoplasm. The enzyme catalyses N(6)-carboxybiotinyl-L-lysyl-[protein] + acetyl-CoA = N(6)-biotinyl-L-lysyl-[protein] + malonyl-CoA. The protein operates within lipid metabolism; malonyl-CoA biosynthesis; malonyl-CoA from acetyl-CoA: step 1/1. Component of the acetyl coenzyme A carboxylase (ACC) complex. Biotin carboxylase (BC) catalyzes the carboxylation of biotin on its carrier protein (BCCP) and then the CO(2) group is transferred by the transcarboxylase to acetyl-CoA to form malonyl-CoA. This is Acetyl-coenzyme A carboxylase carboxyl transferase subunit beta from Enterococcus faecalis (strain ATCC 700802 / V583).